We begin with the raw amino-acid sequence, 417 residues long: Serine hydroxymethyltransferase (417 aa).

Residues leucine 121 and 125 to 127 (GHL) each bind (6S)-5,6,7,8-tetrahydrofolate. Lysine 229 is modified (N6-(pyridoxal phosphate)lysine). Position 355–357 (355–357 (SPF)) interacts with (6S)-5,6,7,8-tetrahydrofolate.

This sequence belongs to the SHMT family. Homodimer. Pyridoxal 5'-phosphate is required as a cofactor.

The protein localises to the cytoplasm. It carries out the reaction (6R)-5,10-methylene-5,6,7,8-tetrahydrofolate + glycine + H2O = (6S)-5,6,7,8-tetrahydrofolate + L-serine. Its pathway is one-carbon metabolism; tetrahydrofolate interconversion. The protein operates within amino-acid biosynthesis; glycine biosynthesis; glycine from L-serine: step 1/1. Catalyzes the reversible interconversion of serine and glycine with tetrahydrofolate (THF) serving as the one-carbon carrier. This reaction serves as the major source of one-carbon groups required for the biosynthesis of purines, thymidylate, methionine, and other important biomolecules. Also exhibits THF-independent aldolase activity toward beta-hydroxyamino acids, producing glycine and aldehydes, via a retro-aldol mechanism. This Erwinia tasmaniensis (strain DSM 17950 / CFBP 7177 / CIP 109463 / NCPPB 4357 / Et1/99) protein is Serine hydroxymethyltransferase.